We begin with the raw amino-acid sequence, 678 residues long: MVPSTFSRLKAARCLPVVLAALIFAGCGTHTPDQSTAYMQGTAQADSAFYLQQMQQSSDDTRINWQLLAIRALVKEGKTGQAVELFNQLPQELNDSQRREKTLLAAEIKLAQKDFAGAQNLLAKITPADLEQNQQARYWQAKIDASQGRPSIDLLRALIAQEPLLGAKEKQQNIDATWQALSSMTQEQANTLVINADENILQGWLDLQRVWFDNRNDPDMMKAGIADWQKRYPNNPGAKMLPTQLVNVKAFKPASTNKIALLLPLNGQAAVFGRTIQQGFEAAKNIGTQPVAAQVAAAPAADVAEQPQPQTADGVASPAQASVSDLTGDQPAAQPVPVSAPATSTAAVSAPANPSAELKIYDTSSQPLSQILSQVQQDGASIVVGPLLKNNVEELLKSNTPLNVLALNQPENIENRVNICYFALSPEDEARDAARHIRDQGKQAPLVLIPRSALGDRVANAFAQEWQKLGGGTVLQQKFGSTSELRAGVNGGSGIALTGSPITPRATTDSGMTTNNPTLQTTPTDDQFTNNGGRVDAVYIVATPGEIAFIKPMIAMRNGSQSGATLYASSRSAQGTAGPDFRLEMEGLQYSEIPMLAGGNLPLMQQALSAVNNDYSLARMYAMGVDAWSLANHFSQMRQVQGFEINGNTGSLTANPDCVINRKLSWLQYQQGQVVPAS.

The signal sequence occupies residues 1 to 26; the sequence is MVPSTFSRLKAARCLPVVLAALIFAG. A lipid anchor (N-palmitoyl cysteine) is attached at C27. Residue C27 is the site of S-diacylglycerol cysteine attachment. Composition is skewed to low complexity over residues 300-310, 330-340, and 513-528; these read AADVAEQPQPQ, QPAAQPVPVSA, and TTNN…DDQF. Disordered stretches follow at residues 300-340 and 496-528; these read AADV…PVSA and ALTG…DDQF.

It belongs to the LpoA family. As to quaternary structure, interacts with PBP1a.

It localises to the cell outer membrane. Its function is as follows. Regulator of peptidoglycan synthesis that is essential for the function of penicillin-binding protein 1A (PBP1a). This chain is Penicillin-binding protein activator LpoA, found in Shigella flexneri serotype 5b (strain 8401).